The following is a 236-amino-acid chain: Rho-related GTP-binding protein RhoV (236 aa).

Residues 1 to 27 (MPPRELSEAESSPLRSPTPPPGRGSAS) are disordered. Ser25 is subject to Phosphoserine. GTP-binding positions include 38–45 (GDGAVGKS), 85–89 (DTAGQ), and 143–146 (TQAD). A lipid anchor (S-palmitoyl cysteine) is attached at Cys234.

The protein belongs to the small GTPase superfamily. Rho family. Interacts with PAK2. It depends on Mg(2+) as a cofactor.

Its subcellular location is the cell membrane. The protein resides in the endosome membrane. Its function is as follows. Plays a role in the control of the actin cytoskeleton via activation of the JNK pathway. The polypeptide is Rho-related GTP-binding protein RhoV (Bos taurus (Bovine)).